Reading from the N-terminus, the 355-residue chain is Phosphoserine aminotransferase (355 aa).

Position 41 (R41) interacts with L-glutamate. Pyridoxal 5'-phosphate contacts are provided by residues 75 to 76 (AS), W99, T147, D166, and Q189. At K190 the chain carries N6-(pyridoxal phosphate)lysine. 231–232 (NT) provides a ligand contact to pyridoxal 5'-phosphate.

Belongs to the class-V pyridoxal-phosphate-dependent aminotransferase family. SerC subfamily. As to quaternary structure, homodimer. Requires pyridoxal 5'-phosphate as cofactor.

Its subcellular location is the cytoplasm. The catalysed reaction is O-phospho-L-serine + 2-oxoglutarate = 3-phosphooxypyruvate + L-glutamate. It catalyses the reaction 4-(phosphooxy)-L-threonine + 2-oxoglutarate = (R)-3-hydroxy-2-oxo-4-phosphooxybutanoate + L-glutamate. It functions in the pathway amino-acid biosynthesis; L-serine biosynthesis; L-serine from 3-phospho-D-glycerate: step 2/3. Its pathway is cofactor biosynthesis; pyridoxine 5'-phosphate biosynthesis; pyridoxine 5'-phosphate from D-erythrose 4-phosphate: step 3/5. In terms of biological role, catalyzes the reversible conversion of 3-phosphohydroxypyruvate to phosphoserine and of 3-hydroxy-2-oxo-4-phosphonooxybutanoate to phosphohydroxythreonine. The protein is Phosphoserine aminotransferase of Parabacteroides distasonis (strain ATCC 8503 / DSM 20701 / CIP 104284 / JCM 5825 / NCTC 11152).